The sequence spans 234 residues: Ubiquinone biosynthesis O-methyltransferase (234 aa).

S-adenosyl-L-methionine is bound by residues arginine 40, glycine 59, aspartate 80, and methionine 123.

Belongs to the methyltransferase superfamily. UbiG/COQ3 family.

It catalyses the reaction a 3-demethylubiquinol + S-adenosyl-L-methionine = a ubiquinol + S-adenosyl-L-homocysteine + H(+). The catalysed reaction is a 3-(all-trans-polyprenyl)benzene-1,2-diol + S-adenosyl-L-methionine = a 2-methoxy-6-(all-trans-polyprenyl)phenol + S-adenosyl-L-homocysteine + H(+). The protein operates within cofactor biosynthesis; ubiquinone biosynthesis. O-methyltransferase that catalyzes the 2 O-methylation steps in the ubiquinone biosynthetic pathway. The polypeptide is Ubiquinone biosynthesis O-methyltransferase (Coxiella burnetii (strain CbuK_Q154) (Coxiella burnetii (strain Q154))).